Reading from the N-terminus, the 196-residue chain is Phosphoheptose isomerase (196 aa).

Residues 33–192 form the SIS domain; sequence LIQSLKNGGK…ESECGENGNT (160 aa). A substrate-binding site is contributed by 48 to 50; sequence NGG. 2 residues coordinate Zn(2+): His-57 and Glu-61. Substrate-binding positions include Glu-61, 90 to 91, 116 to 118, Ser-121, and Gln-168; these read ND and STS. Residues Gln-168 and His-176 each contribute to the Zn(2+) site.

This sequence belongs to the SIS family. GmhA subfamily. In terms of assembly, homotetramer. The cofactor is Zn(2+).

It is found in the cytoplasm. It carries out the reaction 2 D-sedoheptulose 7-phosphate = D-glycero-alpha-D-manno-heptose 7-phosphate + D-glycero-beta-D-manno-heptose 7-phosphate. Its pathway is carbohydrate biosynthesis; D-glycero-D-manno-heptose 7-phosphate biosynthesis; D-glycero-alpha-D-manno-heptose 7-phosphate and D-glycero-beta-D-manno-heptose 7-phosphate from sedoheptulose 7-phosphate: step 1/1. Functionally, catalyzes the isomerization of sedoheptulose 7-phosphate in D-glycero-D-manno-heptose 7-phosphate. This is Phosphoheptose isomerase from Helicobacter hepaticus (strain ATCC 51449 / 3B1).